Here is a 185-residue protein sequence, read N- to C-terminus: Ribosome-recycling factor (185 aa).

This sequence belongs to the RRF family.

The protein resides in the cytoplasm. Responsible for the release of ribosomes from messenger RNA at the termination of protein biosynthesis. May increase the efficiency of translation by recycling ribosomes from one round of translation to another. The sequence is that of Ribosome-recycling factor from Ehrlichia ruminantium (strain Welgevonden).